The primary structure comprises 165 residues: Phosphopantetheine adenylyltransferase (165 aa).

Substrate is bound at residue S9. ATP-binding positions include 9–10 (SF) and H17. The substrate site is built by K41, I75, and R89. Residues 90–92 (GVR), E100, and 125–131 (YLFVRSD) contribute to the ATP site.

It belongs to the bacterial CoaD family. In terms of assembly, homohexamer. Mg(2+) serves as cofactor.

Its subcellular location is the cytoplasm. It catalyses the reaction (R)-4'-phosphopantetheine + ATP + H(+) = 3'-dephospho-CoA + diphosphate. It participates in cofactor biosynthesis; coenzyme A biosynthesis; CoA from (R)-pantothenate: step 4/5. Its function is as follows. Reversibly transfers an adenylyl group from ATP to 4'-phosphopantetheine, yielding dephospho-CoA (dPCoA) and pyrophosphate. The polypeptide is Phosphopantetheine adenylyltransferase (Borrelia hermsii (strain HS1 / DAH)).